The sequence spans 253 residues: Glucosamine-6-phosphate deaminase (253 aa).

Asp-65 acts as the Proton acceptor; for enolization step in catalysis. Asn-133 functions as the For ring-opening step in the catalytic mechanism. His-135 (proton acceptor; for ring-opening step) is an active-site residue. Glu-140 acts as the For ring-opening step in catalysis.

It belongs to the glucosamine/galactosamine-6-phosphate isomerase family. NagB subfamily.

The catalysed reaction is alpha-D-glucosamine 6-phosphate + H2O = beta-D-fructose 6-phosphate + NH4(+). Its pathway is amino-sugar metabolism; N-acetylneuraminate degradation; D-fructose 6-phosphate from N-acetylneuraminate: step 5/5. Functionally, catalyzes the reversible isomerization-deamination of glucosamine 6-phosphate (GlcN6P) to form fructose 6-phosphate (Fru6P) and ammonium ion. This chain is Glucosamine-6-phosphate deaminase, found in Corynebacterium efficiens (strain DSM 44549 / YS-314 / AJ 12310 / JCM 11189 / NBRC 100395).